The sequence spans 278 residues: UPF0758 protein BURPS668_0979 (278 aa).

Residues 1 to 64 (MQYEIVSAGE…ATAAARRGRD (64 aa)) are disordered. A compositionally biased stretch (low complexity) spans 22-59 (AAAPAAPSSAVPSSAALSSAALSSAARPTGAPPATAAA). Positions 156 to 278 (LVDSPGAVDD…TFSFAQAGWI (123 aa)) constitute an MPN domain. Residues His-227, His-229, and Asp-240 each coordinate Zn(2+). The JAMM motif motif lies at 227-240 (HNHPSGAVRPSAAD).

Belongs to the UPF0758 family.

In Burkholderia pseudomallei (strain 668), this protein is UPF0758 protein BURPS668_0979.